Reading from the N-terminus, the 658-residue chain is CXXC-type zinc finger protein 1 (658 aa).

An N-acetylmethionine modification is found at Met-1. A compositionally biased stretch (acidic residues) spans 1 to 14 (MEGDASDPEPPDAG). A disordered region spans residues 1-20 (MEGDASDPEPPDAGEDSKSE). 2 positions are modified to phosphoserine: Ser-6 and Ser-19. The PHD-type zinc finger occupies 28–76 (YCICRKPDINCFMIGCDNCNEWFHGDCIRITEKMAKAIREWYCRECREK). The tract at residues 84 to 164 (YRHKKSRERD…HQQQQQQQQI (81 aa)) is disordered. Over residues 90–120 (RERDSSERDGSEPRDEGGGRKRPAPDPDLQR) the composition is skewed to basic and acidic residues. Positions 153–163 (QHHQQQQQQQQ) are enriched in low complexity. The CXXC-type zinc-finger motif lies at 162 to 211 (QQIKRSARMCGECEACRRTEDCGHCDFCRDMKKFGGPNKIRQKCRLRQCQ). 8 residues coordinate Zn(2+): Cys-171, Cys-174, Cys-177, Cys-183, Cys-186, Cys-189, Cys-205, and Cys-210. 2 disordered regions span residues 221-285 (FPSS…SDED) and 327-373 (VKVK…DPAS). Ser-226 carries the post-translational modification Phosphoserine. A Phosphothreonine modification is found at Thr-229. Lys-252 is covalently cross-linked (Glycyl lysine isopeptide (Lys-Gly) (interchain with G-Cter in SUMO2)). The span at 327–336 (VKVKHVKRRE) shows a compositional bias: basic residues. Residues 337–347 (KKSEKKKDERY) show a composition bias toward basic and acidic residues. Over residues 348-360 (KRHRQKQKHKDKW) the composition is skewed to basic residues. Residues 361–370 (KHPERADAKD) are compositionally biased toward basic and acidic residues. Positions 428-470 (GKKLLERIRREQQSARTRLQEMERRFHELEAIILRAKQQAVRE) form a coiled coil.

As to quaternary structure, component of the SET1 complex, at least composed of the catalytic subunit (SETD1A or SETD1B), WDR5, WDR82, RBBP5, ASH2L/ASH2, CXXC1/CFP1, HCFC1 and DPY30. Interacts with SETD1A. Interacts with ZNF335. Interacts with PRDM9; this interaction does not link PRDM9-activated recombination hotspot sites with DSB machinery and is not required for the hotspot recognition pathway. Interacts with histone H3K4me3. In terms of processing, may be regulated by proteolysis.

It is found in the nucleus speckle. It localises to the nucleus. Transcriptional activator that exhibits a unique DNA binding specificity for CpG unmethylated motifs with a preference for CpGG. This chain is CXXC-type zinc finger protein 1 (CXXC1), found in Bos taurus (Bovine).